A 182-amino-acid polypeptide reads, in one-letter code: Endoribonuclease YbeY (182 aa).

Zn(2+)-binding residues include His115, His119, and His125.

This sequence belongs to the endoribonuclease YbeY family. Zn(2+) serves as cofactor.

The protein localises to the cytoplasm. Single strand-specific metallo-endoribonuclease involved in late-stage 70S ribosome quality control and in maturation of the 3' terminus of the 16S rRNA. This chain is Endoribonuclease YbeY, found in Bifidobacterium longum (strain NCC 2705).